A 230-amino-acid polypeptide reads, in one-letter code: Cytochrome c oxidase subunit 2 (230 aa).

At 1–26 (MATPAQLGLMDAASPVMEEMIYFHDH) the chain is on the mitochondrial intermembrane side. The helical transmembrane segment at 27–48 (VMLVLILITCLIFYSMLVLISS) threads the bilayer. Topologically, residues 49–62 (KYIYRFLTDGHVIE) are mitochondrial matrix. A helical transmembrane segment spans residues 63–82 (TVWTVIPAIILVVVALPSLK). Over 83–230 (LLYLTDELDN…GWCDMMLDEE (148 aa)) the chain is Mitochondrial intermembrane. The Cu cation site is built by His161, Cys196, Glu198, Cys200, His204, and Met207. A Mg(2+)-binding site is contributed by Glu198.

This sequence belongs to the cytochrome c oxidase subunit 2 family. Component of the cytochrome c oxidase (complex IV, CIV), a multisubunit enzyme composed of a catalytic core of 3 subunits and several supernumerary subunits. The complex exists as a monomer or a dimer and forms supercomplexes (SCs) in the inner mitochondrial membrane with ubiquinol-cytochrome c oxidoreductase (cytochrome b-c1 complex, complex III, CIII). Cu cation is required as a cofactor.

The protein localises to the mitochondrion inner membrane. It catalyses the reaction 4 Fe(II)-[cytochrome c] + O2 + 8 H(+)(in) = 4 Fe(III)-[cytochrome c] + 2 H2O + 4 H(+)(out). Functionally, component of the cytochrome c oxidase, the last enzyme in the mitochondrial electron transport chain which drives oxidative phosphorylation. The respiratory chain contains 3 multisubunit complexes succinate dehydrogenase (complex II, CII), ubiquinol-cytochrome c oxidoreductase (cytochrome b-c1 complex, complex III, CIII) and cytochrome c oxidase (complex IV, CIV), that cooperate to transfer electrons derived from NADH and succinate to molecular oxygen, creating an electrochemical gradient over the inner membrane that drives transmembrane transport and the ATP synthase. Cytochrome c oxidase is the component of the respiratory chain that catalyzes the reduction of oxygen to water. Electrons originating from reduced cytochrome c in the intermembrane space (IMS) are transferred via the dinuclear copper A center (CU(A)) of subunit 2 and heme A of subunit 1 to the active site in subunit 1, a binuclear center (BNC) formed by heme A3 and copper B (CU(B)). The BNC reduces molecular oxygen to 2 water molecules using 4 electrons from cytochrome c in the IMS and 4 protons from the mitochondrial matrix. This is Cytochrome c oxidase subunit 2 (COII) from Branchiostoma floridae (Florida lancelet).